A 339-amino-acid polypeptide reads, in one-letter code: uncharacterized protein (339 aa).

NADP(+) is bound by residues I54, K78, D101, N128, Y213, and K217. Catalysis depends on Y213, which acts as the Proton donor. K217 serves as the catalytic Lowers pKa of active site Tyr.

This sequence belongs to the short-chain dehydrogenases/reductases (SDR) family.

This is an uncharacterized protein from Schizosaccharomyces pombe (strain 972 / ATCC 24843) (Fission yeast).